The primary structure comprises 1314 residues: E3 ubiquitin-protein ligase RNF123 (1314 aa).

At Ala2 the chain carries N-acetylalanine. One can recognise a B30.2/SPRY domain in the interval 74 to 254 (VDSEDEESQG…VAFNFGSRPL (181 aa)). A disordered region spans residues 460-481 (HRSSREGKDSAEDRAEAAEERP). The segment covering 462-481 (SSREGKDSAEDRAEAAEERP) has biased composition (basic and acidic residues). Ser675 is subject to Phosphoserine. Residue Arg683 is modified to Asymmetric dimethylarginine. The segment at 968-974 (WILVRLW) is interaction with NFKB1. Zn(2+) contacts are provided by Cys1254, Cys1257, Cys1269, His1271, Cys1274, Cys1277, Cys1288, and Cys1291. The RING-type zinc-finger motif lies at 1254 to 1292 (CPICYAHPISAVFQPCGHKSCKACIDQHLMNNKDCFFCK).

In terms of assembly, component of the KPC complex composed of RNF123/KPC1 and UBAC1/KPC2. Interacts with UBAC1 and CDKN1B via its N-terminal domain. Interacts with RIGI (via N-terminus) and IFIH1 (via N-terminus). Ubiquitinated, leading to its degradation. Deubiquitinated by USP19, thereby stimulating CDKN1B ubiquitin-dependent degradation.

Its subcellular location is the cytoplasm. It catalyses the reaction S-ubiquitinyl-[E2 ubiquitin-conjugating enzyme]-L-cysteine + [acceptor protein]-L-lysine = [E2 ubiquitin-conjugating enzyme]-L-cysteine + N(6)-ubiquitinyl-[acceptor protein]-L-lysine.. It participates in protein modification; protein ubiquitination. Functionally, catalytic subunit of the KPC complex that acts as E3 ubiquitin-protein ligase. Promotes the ubiquitination and proteasome-mediated degradation of CDKN1B which is the cyclin-dependent kinase inhibitor at the G0-G1 transition of the cell cycle. Also acts as a key regulator of the NF-kappa-B signaling by promoting maturation of the NFKB1 component of NF-kappa-B. Acts by catalyzing ubiquitination of the NFKB1 p105 precursor, leading to limited proteasomal degradation of NFKB1 p105 and generation of the active NFKB1 p50 subunit. Functions also as an inhibitor of innate antiviral signaling mediated by RIGI and IFIH1 independently of its E3 ligase activity. Interacts with the N-terminal CARD domains of RIGI and IFIH1 and competes with the downstream adapter MAVS. The protein is E3 ubiquitin-protein ligase RNF123 of Oryctolagus cuniculus (Rabbit).